A 51-amino-acid chain; its full sequence is U-Asilidin(1)-Mar1a (51 aa).

Residues 1–23 (MANYIEVFSVLAIIFATVLAALA) form the signal peptide. Cystine bridges form between Cys-26–Cys-40, Cys-33–Cys-44, and Cys-39–Cys-49.

Belongs to the asilidin-1 family. As to expression, expressed by the venom gland. Is the most highly expressed peptide and is around 3000 times higher expressed in the thoracic glands compared to its body tissues.

It is found in the secreted. Functionally, induces neurotoxic effect on honeybees, including slow movements, disorientation and paralysis. Since it provokes similar symptoms than omega-atracotoxin, it is probable that it acts in the same way by inhibiting voltage-gated calcium channels. This is U-Asilidin(1)-Mar1a from Machimus arthriticus (Breck robberfly).